We begin with the raw amino-acid sequence, 393 residues long: Formate-dependent phosphoribosylglycinamide formyltransferase (393 aa).

N(1)-(5-phospho-beta-D-ribosyl)glycinamide-binding positions include 22–23 and Glu-82; that span reads EL. ATP is bound by residues Arg-114, Lys-155, 160–165, 195–198, and Glu-203; these read SSGKGQ and EGFI. The ATP-grasp domain occupies 119 to 308; the sequence is RLAAEELGLP…EFALHARAIL (190 aa). 2 residues coordinate Mg(2+): Glu-267 and Glu-279. N(1)-(5-phospho-beta-D-ribosyl)glycinamide is bound by residues Asp-286, Lys-356, and 363–364; that span reads RR.

The protein belongs to the PurK/PurT family. As to quaternary structure, homodimer.

The enzyme catalyses N(1)-(5-phospho-beta-D-ribosyl)glycinamide + formate + ATP = N(2)-formyl-N(1)-(5-phospho-beta-D-ribosyl)glycinamide + ADP + phosphate + H(+). It functions in the pathway purine metabolism; IMP biosynthesis via de novo pathway; N(2)-formyl-N(1)-(5-phospho-D-ribosyl)glycinamide from N(1)-(5-phospho-D-ribosyl)glycinamide (formate route): step 1/1. Functionally, involved in the de novo purine biosynthesis. Catalyzes the transfer of formate to 5-phospho-ribosyl-glycinamide (GAR), producing 5-phospho-ribosyl-N-formylglycinamide (FGAR). Formate is provided by PurU via hydrolysis of 10-formyl-tetrahydrofolate. In Stutzerimonas stutzeri (strain A1501) (Pseudomonas stutzeri), this protein is Formate-dependent phosphoribosylglycinamide formyltransferase.